We begin with the raw amino-acid sequence, 158 residues long: SsrA-binding protein (158 aa).

Belongs to the SmpB family.

It localises to the cytoplasm. In terms of biological role, required for rescue of stalled ribosomes mediated by trans-translation. Binds to transfer-messenger RNA (tmRNA), required for stable association of tmRNA with ribosomes. tmRNA and SmpB together mimic tRNA shape, replacing the anticodon stem-loop with SmpB. tmRNA is encoded by the ssrA gene; the 2 termini fold to resemble tRNA(Ala) and it encodes a 'tag peptide', a short internal open reading frame. During trans-translation Ala-aminoacylated tmRNA acts like a tRNA, entering the A-site of stalled ribosomes, displacing the stalled mRNA. The ribosome then switches to translate the ORF on the tmRNA; the nascent peptide is terminated with the 'tag peptide' encoded by the tmRNA and targeted for degradation. The ribosome is freed to recommence translation, which seems to be the essential function of trans-translation. The sequence is that of SsrA-binding protein from Roseiflexus sp. (strain RS-1).